Reading from the N-terminus, the 294-residue chain is Acetylglutamate kinase (294 aa).

Substrate is bound by residues 67-68 (GG), arginine 89, and asparagine 193.

The protein belongs to the acetylglutamate kinase family. ArgB subfamily.

The protein resides in the cytoplasm. It catalyses the reaction N-acetyl-L-glutamate + ATP = N-acetyl-L-glutamyl 5-phosphate + ADP. The protein operates within amino-acid biosynthesis; L-arginine biosynthesis; N(2)-acetyl-L-ornithine from L-glutamate: step 2/4. Its function is as follows. Catalyzes the ATP-dependent phosphorylation of N-acetyl-L-glutamate. The protein is Acetylglutamate kinase of Leptospira interrogans serogroup Icterohaemorrhagiae serovar copenhageni (strain Fiocruz L1-130).